Reading from the N-terminus, the 110-residue chain is MPETHAILRGVRLSVDKGRLVADLIRGKKVDQALNILNFTQKKAAGIIRKVLESAIANAEHNDSADIDELKVKTIHVEQGTTLKRSAARAKGRGNRISKPTCHVYVTVGN.

Belongs to the universal ribosomal protein uL22 family. As to quaternary structure, part of the 50S ribosomal subunit.

In terms of biological role, this protein binds specifically to 23S rRNA; its binding is stimulated by other ribosomal proteins, e.g. L4, L17, and L20. It is important during the early stages of 50S assembly. It makes multiple contacts with different domains of the 23S rRNA in the assembled 50S subunit and ribosome. Its function is as follows. The globular domain of the protein is located near the polypeptide exit tunnel on the outside of the subunit, while an extended beta-hairpin is found that lines the wall of the exit tunnel in the center of the 70S ribosome. In Verminephrobacter eiseniae (strain EF01-2), this protein is Large ribosomal subunit protein uL22.